The primary structure comprises 271 residues: 2,3,4,5-tetrahydropyridine-2,6-dicarboxylate N-succinyltransferase (271 aa).

Substrate contacts are provided by arginine 102 and aspartate 139.

The protein belongs to the transferase hexapeptide repeat family. In terms of assembly, homotrimer.

The protein localises to the cytoplasm. The catalysed reaction is (S)-2,3,4,5-tetrahydrodipicolinate + succinyl-CoA + H2O = (S)-2-succinylamino-6-oxoheptanedioate + CoA. It functions in the pathway amino-acid biosynthesis; L-lysine biosynthesis via DAP pathway; LL-2,6-diaminopimelate from (S)-tetrahydrodipicolinate (succinylase route): step 1/3. In Coxiella burnetii (strain Dugway 5J108-111), this protein is 2,3,4,5-tetrahydropyridine-2,6-dicarboxylate N-succinyltransferase.